Consider the following 155-residue polypeptide: Small ribosomal subunit protein uS7c (155 aa).

It belongs to the universal ribosomal protein uS7 family. As to quaternary structure, part of the 30S ribosomal subunit.

It is found in the plastid. Its subcellular location is the chloroplast. One of the primary rRNA binding proteins, it binds directly to 16S rRNA where it nucleates assembly of the head domain of the 30S subunit. The sequence is that of Small ribosomal subunit protein uS7c (rps7) from Spathiphyllum wallisii (Peace lily).